A 998-amino-acid polypeptide reads, in one-letter code: Regulator of telomere elongation helicase 1 homolog (998 aa).

The Helicase ATP-binding domain occupies 7–324 (AGIPVHFPFE…KEMLLELEKA (318 aa)). An ATP-binding site is contributed by 42-49 (SPTGTGKT). C148, C166, C175, and C211 together coordinate [4Fe-4S] cluster. The DEAH box motif lies at 254-257 (DEAH). Residues 426–454 (QNAGKPAPKQQQQGGWLGKGNNTSNSSSS) are disordered. The residue at position 887 (T887) is a Phosphothreonine.

Belongs to the helicase family. RAD3/XPD subfamily.

The protein localises to the nucleus. It carries out the reaction ATP + H2O = ADP + phosphate + H(+). A probable ATP-dependent DNA helicase implicated in DNA repair and the maintenance of genomic stability. Acts as an anti-recombinase to counteract toxic recombination and limit crossover during meiosis. Regulates meiotic recombination and crossover homeostasis by physically dissociating strand invasion events and thereby promotes noncrossover repair by meiotic synthesis dependent strand annealing (SDSA) as well as disassembly of D loop recombination intermediates. The protein is Regulator of telomere elongation helicase 1 homolog of Drosophila willistoni (Fruit fly).